Here is a 354-residue protein sequence, read N- to C-terminus: GTPase Obg (354 aa).

The Obg domain occupies 1-159 (MKFLDQCKIY…LWVWLRLKLI (159 aa)). One can recognise an OBG-type G domain in the interval 160–328 (ADVGLVGLPN…LLRAAFTQVR (169 aa)). Residues 166-173 (GLPNAGKS), 191-195 (FTTLT), 213-216 (DIPG), 280-283 (NKVD), and 309-311 (SGV) each bind GTP. Mg(2+) is bound by residues serine 173 and threonine 193. Residues 333–354 (ETPAEAAIDEAPEEETPGGWQP) form a disordered region. A compositionally biased stretch (acidic residues) spans 339-348 (AIDEAPEEET).

Belongs to the TRAFAC class OBG-HflX-like GTPase superfamily. OBG GTPase family. As to quaternary structure, monomer. The cofactor is Mg(2+).

The protein localises to the cytoplasm. Functionally, an essential GTPase which binds GTP, GDP and possibly (p)ppGpp with moderate affinity, with high nucleotide exchange rates and a fairly low GTP hydrolysis rate. Plays a role in control of the cell cycle, stress response, ribosome biogenesis and in those bacteria that undergo differentiation, in morphogenesis control. The chain is GTPase Obg from Caulobacter sp. (strain K31).